The sequence spans 399 residues: Formate-dependent phosphoribosylglycinamide formyltransferase (399 aa).

N(1)-(5-phospho-beta-D-ribosyl)glycinamide contacts are provided by residues 22–23 and E82; that span reads EL. ATP contacts are provided by residues R115, K157, 162–167, 197–200, and E205; these read SSGKGQ and EAVV. One can recognise an ATP-grasp domain in the interval 120–315; it reads RLAAEELGLQ…EFELHARAIL (196 aa). The Mg(2+) site is built by E274 and E286. N(1)-(5-phospho-beta-D-ribosyl)glycinamide-binding positions include D293, K362, and 369–370; that span reads RR.

Belongs to the PurK/PurT family. Homodimer.

The catalysed reaction is N(1)-(5-phospho-beta-D-ribosyl)glycinamide + formate + ATP = N(2)-formyl-N(1)-(5-phospho-beta-D-ribosyl)glycinamide + ADP + phosphate + H(+). Its pathway is purine metabolism; IMP biosynthesis via de novo pathway; N(2)-formyl-N(1)-(5-phospho-D-ribosyl)glycinamide from N(1)-(5-phospho-D-ribosyl)glycinamide (formate route): step 1/1. In terms of biological role, involved in the de novo purine biosynthesis. Catalyzes the transfer of formate to 5-phospho-ribosyl-glycinamide (GAR), producing 5-phospho-ribosyl-N-formylglycinamide (FGAR). Formate is provided by PurU via hydrolysis of 10-formyl-tetrahydrofolate. The protein is Formate-dependent phosphoribosylglycinamide formyltransferase of Thioalkalivibrio sulfidiphilus (strain HL-EbGR7).